Reading from the N-terminus, the 127-residue chain is Evasin P467 (127 aa).

Positions 1 to 21 (MALKACITVIAVVYVVQVVRG) are cleaved as a signal peptide. Cystine bridges form between cysteine 42–cysteine 63, cysteine 59–cysteine 100, cysteine 76–cysteine 105, and cysteine 95–cysteine 114. Residues asparagine 49 and asparagine 94 are each glycosylated (N-linked (GlcNAc...) asparagine).

It localises to the secreted. In terms of biological role, salivary chemokine-binding protein which binds to host chemokines CCL1, CCL2, CCL3 and CCL5. This is Evasin P467 from Rhipicephalus pulchellus (Yellow backed tick).